Consider the following 109-residue polypeptide: Mannose-specific lectin (109 aa).

The Bulb-type lectin domain occupies 1–109; that stretch reads DNILYSSEVL…PPIWATGTGR (109 aa). C29 and C52 are oxidised to a cystine. Positions 79-82 are excised as a propeptide; the sequence is TGTN.

In terms of assembly, homotrimer or homotetramer.

It localises to the secreted. Its function is as follows. Mannose-specific lectin. Shows agglutinating activity toward rabbit erythrocytes and mitogenic activity towards mouse lymphocytes. The protein is Mannose-specific lectin of Aloe arborescens (Kidachi aloe).